The sequence spans 135 residues: MASLKDLEGKWRLVESHGFEDYMKELGVGLALRKMGAMAKPDCIITLDGNNLTVKTESTVKTTVFSCTLGEKFDETTADGRKTETVCTFTDGALVQHQKWEGKESTITRKLKDGKMVVECVMNNAICTRVYEKVQ.

Ala2 is subject to N-acetylalanine. Residue Ser3 is modified to Phosphoserine. The Nuclear localization signal motif lies at Lys24–Lys34. The N-eicosanoyl ethanolamine site is built by Cys43 and Arg109. An intrachain disulfide couples Cys120 to Cys127. Arg129 to Tyr131 provides a ligand contact to (9Z,12Z)-octadecadienoate. Tyr131 contacts N-eicosanoyl ethanolamine. Tyr131 serves as a coordination point for hexadecanoate. Phosphotyrosine is present on Tyr131.

The protein belongs to the calycin superfamily. Fatty-acid binding protein (FABP) family. In terms of assembly, monomer.

It localises to the cytoplasm. The protein localises to the nucleus. Its subcellular location is the synapse. The protein resides in the postsynaptic density. It is found in the secreted. The enzyme catalyses hexadecanoate(out) = hexadecanoate(in). The catalysed reaction is (9Z,12Z)-octadecadienoate(out) = (9Z,12Z)-octadecadienoate(in). It carries out the reaction (9Z)-octadecenoate(out) = (9Z)-octadecenoate(in). In terms of biological role, intracellular carrier for long-chain fatty acids and related active lipids, such as endocannabinoids, that regulate the metabolism and actions of the ligands they bind. In addition to the cytosolic transport, selectively delivers specific fatty acids from the cytosol to the nucleus, wherein they activate nuclear receptors. Delivers retinoic acid to the nuclear receptor peroxisome proliferator-activated receptor delta; which promotes proliferation and survival. May also serve as a synaptic carrier of endocannabinoid at central synapses and thus controls retrograde endocannabinoid signaling. Modulates inflammation by regulating PTGES induction via NF-kappa-B activation, and prostaglandin E2 (PGE2) biosynthesis during inflammation. The protein is Fatty acid-binding protein 5 of Rattus norvegicus (Rat).